A 419-amino-acid chain; its full sequence is Tyrosine--tRNA ligase (419 aa).

L-tyrosine is bound at residue Tyr-42. Positions 47–56 (ATAPSLHVGS) match the 'HIGH' region motif. Residues Tyr-179 and Gln-183 each coordinate L-tyrosine. Positions 239–243 (KMGKT) match the 'KMSKS' region motif. An ATP-binding site is contributed by Lys-242. Positions 353-418 (IVLANLFADA…GKKKIVLVKP (66 aa)) constitute an S4 RNA-binding domain.

It belongs to the class-I aminoacyl-tRNA synthetase family. TyrS type 1 subfamily. Homodimer.

The protein resides in the cytoplasm. It carries out the reaction tRNA(Tyr) + L-tyrosine + ATP = L-tyrosyl-tRNA(Tyr) + AMP + diphosphate + H(+). Catalyzes the attachment of tyrosine to tRNA(Tyr) in a two-step reaction: tyrosine is first activated by ATP to form Tyr-AMP and then transferred to the acceptor end of tRNA(Tyr). The chain is Tyrosine--tRNA ligase from Caulobacter sp. (strain K31).